The chain runs to 129 residues: Small ribosomal subunit protein uS11 (129 aa).

Belongs to the universal ribosomal protein uS11 family. In terms of assembly, part of the 30S ribosomal subunit. Interacts with proteins S7 and S18. Binds to IF-3.

Located on the platform of the 30S subunit, it bridges several disparate RNA helices of the 16S rRNA. Forms part of the Shine-Dalgarno cleft in the 70S ribosome. The polypeptide is Small ribosomal subunit protein uS11 (Bradyrhizobium diazoefficiens (strain JCM 10833 / BCRC 13528 / IAM 13628 / NBRC 14792 / USDA 110)).